A 246-amino-acid polypeptide reads, in one-letter code: Small ribosomal subunit protein uS2c (246 aa).

This sequence belongs to the universal ribosomal protein uS2 family.

The protein localises to the plastid. It is found in the chloroplast. In Pelargonium hortorum (Common geranium), this protein is Small ribosomal subunit protein uS2c (rps2).